A 185-amino-acid chain; its full sequence is Ribosome-recycling factor (185 aa).

The protein belongs to the RRF family.

The protein resides in the cytoplasm. Responsible for the release of ribosomes from messenger RNA at the termination of protein biosynthesis. May increase the efficiency of translation by recycling ribosomes from one round of translation to another. The protein is Ribosome-recycling factor of Dichelobacter nodosus (strain VCS1703A).